A 152-amino-acid polypeptide reads, in one-letter code: Large ribosomal subunit protein bL9 (152 aa).

Belongs to the bacterial ribosomal protein bL9 family.

Its function is as follows. Binds to the 23S rRNA. The polypeptide is Large ribosomal subunit protein bL9 (Corynebacterium urealyticum (strain ATCC 43042 / DSM 7109)).